A 415-amino-acid chain; its full sequence is Lupus La protein homolog (415 aa).

Residues 7–99 form the HTH La-type RNA-binding domain; it reads NEKMAALEAK…RRSPSRPLPE (93 aa). 2 positions are modified to phosphoserine: S92 and S94. The RRM domain maps to 111 to 187; that stretch reads RSVYIKGFPT…TNLLILFKED (77 aa). At K116 the chain carries N6-acetyllysine. The residue at position 120 (T120) is a Phosphothreonine. 2 positions are modified to N6-acetyllysine: K128 and K327. Residues 226–343 form the xRRM domain; that stretch reads EGKMGCLLKF…HAARRFKGSH (118 aa). The disordered stretch occupies residues 323–415; it reads ESLNKWKSKG…KKRENGARDK (93 aa). Residues 328 to 341 show a composition bias toward basic residues; the sequence is WKSKGGHAARRFKG. An N6-acetyllysine modification is found at K356. At T377 the chain carries Phosphothreonine. A compositionally biased stretch (basic and acidic residues) spans 377-415; that stretch reads TRFDDDDHRRGPVKRGIDGRDREEPASKHKKRENGARDK.

In terms of assembly, interacts with DDX15. May interact with RUFY1. In terms of processing, phosphorylated.

It localises to the nucleus. Its function is as follows. Binds to the 3' poly(U) terminus of nascent RNA polymerase III transcripts, protecting them from exonuclease digestion and facilitating their folding and maturation. The sequence is that of Lupus La protein homolog (Ssb) from Rattus norvegicus (Rat).